The primary structure comprises 183 residues: Ribosome rescue factor SmrB (183 aa).

One can recognise a Smr domain in the interval 98–173; it reads LDLHGLTQLQ…GDAALLVLIE (76 aa).

Belongs to the SmrB family. In terms of assembly, associates with collided ribosomes, but not with correctly translating polysomes.

Functionally, acts as a ribosome collision sensor. Detects stalled/collided disomes (pairs of ribosomes where the leading ribosome is stalled and a second ribosome has collided with it) and endonucleolytically cleaves mRNA at the 5' boundary of the stalled ribosome. Stalled/collided disomes form a new interface (primarily via the 30S subunits) that binds SmrB. Cleaved mRNA becomes available for tmRNA ligation, leading to ribosomal subunit dissociation and rescue of stalled ribosomes. The sequence is that of Ribosome rescue factor SmrB from Escherichia fergusonii (strain ATCC 35469 / DSM 13698 / CCUG 18766 / IAM 14443 / JCM 21226 / LMG 7866 / NBRC 102419 / NCTC 12128 / CDC 0568-73).